The chain runs to 560 residues: Protein AATF (560 aa).

Ala-2 is subject to N-acetylalanine. Ser-61 and Ser-63 each carry phosphoserine. Residues 76 to 208 (TSRKAWNEDH…GDRNSEDDGV (133 aa)) are disordered. The segment covering 94 to 129 (SDEEISDEEGSGDEDSEGLGLEEYDEDDLGAAEEQE) has biased composition (acidic residues). Ser-150 and Ser-155 each carry phosphoserine. Over residues 156 to 165 (DFEKFTKGMD) the composition is skewed to basic and acidic residues. Acidic residues predominate over residues 168–195 (GSSEEEEDEESGMEEGDDAEDSQGESEE). 5 positions are modified to phosphoserine: Ser-203, Ser-273, Ser-316, Ser-320, and Ser-321. Residues 273–315 (SALKNSHKALKALLRSLVGLQEELLFQYPDTRYLVDGTKPNAG) are POLR2J binding. Residues 309–333 (GTKPNAGSEEISSEDDELVEEKKQQ) are disordered. The tract at residues 316 to 372 (SEEISSEDDELVEEKKQQRRRVPAKRKLEMEDYPSFMAKRFADFTVYRNRTLQKWHD) is RB1 binding. Residues 373-472 (KTKLASGKLG…FYHQLLRELI (100 aa)) are RB1 and SP1 binding.

The protein belongs to the AATF family. In terms of assembly, part of the small subunit (SSU) processome, composed of more than 70 proteins and the RNA chaperone small nucleolar RNA (snoRNA) U3. Interacts with POLR2J, RB1/RB, RBL1/P107 and RBL2/P130. Interacts with PAWR and SP1. May also bind MAPT. Hyperphosphorylated during the G1/S phase transition. As to expression, ubiquitously expressed. Expressed at high levels in brain, heart, kidney, placenta and thymus.

The protein resides in the nucleus. It localises to the nucleolus. Functionally, part of the small subunit (SSU) processome, first precursor of the small eukaryotic ribosomal subunit. During the assembly of the SSU processome in the nucleolus, many ribosome biogenesis factors, an RNA chaperone and ribosomal proteins associate with the nascent pre-rRNA and work in concert to generate RNA folding, modifications, rearrangements and cleavage as well as targeted degradation of pre-ribosomal RNA by the RNA exosome. May function as a general inhibitor of the histone deacetylase HDAC1. Binding to the pocket region of RB1 may displace HDAC1 from RB1/E2F complexes, leading to activation of E2F target genes and cell cycle progression. Conversely, displacement of HDAC1 from SP1 bound to the CDKN1A promoter leads to increased expression of this CDK inhibitor and blocks cell cycle progression. Also antagonizes PAWR mediated induction of aberrant amyloid peptide production in Alzheimer disease (presenile and senile dementia), although the molecular basis for this phenomenon has not been described to date. In Homo sapiens (Human), this protein is Protein AATF.